The primary structure comprises 518 residues: Putative cytochrome P450 CYP13A6 (518 aa).

Heme is bound at residue cysteine 463.

This sequence belongs to the cytochrome P450 family. The cofactor is heme.

In terms of biological role, cytochromes P450 are a group of heme-thiolate monooxygenases. They oxidize a variety of structurally unrelated compounds, including steroids, fatty acids, and xenobiotics. The protein is Putative cytochrome P450 CYP13A6 (cyp-13A6) of Caenorhabditis elegans.